The sequence spans 405 residues: Arginine biosynthesis bifunctional protein ArgJ (405 aa).

Residues T152, K178, T189, E276, N400, and T405 each coordinate substrate. T189 acts as the Nucleophile in catalysis.

This sequence belongs to the ArgJ family. In terms of assembly, heterotetramer of two alpha and two beta chains.

Its subcellular location is the cytoplasm. It carries out the reaction N(2)-acetyl-L-ornithine + L-glutamate = N-acetyl-L-glutamate + L-ornithine. The enzyme catalyses L-glutamate + acetyl-CoA = N-acetyl-L-glutamate + CoA + H(+). The protein operates within amino-acid biosynthesis; L-arginine biosynthesis; L-ornithine and N-acetyl-L-glutamate from L-glutamate and N(2)-acetyl-L-ornithine (cyclic): step 1/1. Its pathway is amino-acid biosynthesis; L-arginine biosynthesis; N(2)-acetyl-L-ornithine from L-glutamate: step 1/4. Catalyzes two activities which are involved in the cyclic version of arginine biosynthesis: the synthesis of N-acetylglutamate from glutamate and acetyl-CoA as the acetyl donor, and of ornithine by transacetylation between N(2)-acetylornithine and glutamate. This chain is Arginine biosynthesis bifunctional protein ArgJ, found in Pseudomonas fluorescens (strain ATCC BAA-477 / NRRL B-23932 / Pf-5).